The primary structure comprises 187 residues: Orotate phosphoribosyltransferase (187 aa).

Residues arginine 98, lysine 99, lysine 102, histidine 104, and 128-136 each bind 5-phospho-alpha-D-ribose 1-diphosphate; that span reads EDVTTTGGS. Orotate is bound by residues threonine 132 and arginine 160.

This sequence belongs to the purine/pyrimidine phosphoribosyltransferase family. PyrE subfamily. In terms of assembly, homodimer. Mg(2+) is required as a cofactor.

The enzyme catalyses orotidine 5'-phosphate + diphosphate = orotate + 5-phospho-alpha-D-ribose 1-diphosphate. The protein operates within pyrimidine metabolism; UMP biosynthesis via de novo pathway; UMP from orotate: step 1/2. Its function is as follows. Catalyzes the transfer of a ribosyl phosphate group from 5-phosphoribose 1-diphosphate to orotate, leading to the formation of orotidine monophosphate (OMP). The polypeptide is Orotate phosphoribosyltransferase (Rhodopseudomonas palustris (strain TIE-1)).